The sequence spans 140 residues: Large ribosomal subunit protein uL15 (140 aa).

The disordered stretch occupies residues 1–31; sequence MDTKKFRGSRTCGGGTHKNRRGAGNRGGRGK.

The protein belongs to the universal ribosomal protein uL15 family. Part of the 50S ribosomal subunit.

In terms of biological role, binds to the 23S rRNA. This Methanosarcina barkeri (strain Fusaro / DSM 804) protein is Large ribosomal subunit protein uL15.